Reading from the N-terminus, the 235-residue chain is Ribonuclease 3 (235 aa).

The 128-residue stretch at 7 to 134 folds into the RNase III domain; that stretch reads LKDLQNKIEI…LIASIYLDKG (128 aa). Residue glutamate 47 participates in Mg(2+) binding. Aspartate 51 is an active-site residue. Residues aspartate 120 and glutamate 123 each contribute to the Mg(2+) site. The active site involves glutamate 123. Residues 161–230 form the DRBM domain; it reads DYKTKLQEII…AKKAIENMEV (70 aa).

It belongs to the ribonuclease III family. As to quaternary structure, homodimer. Requires Mg(2+) as cofactor.

It is found in the cytoplasm. It carries out the reaction Endonucleolytic cleavage to 5'-phosphomonoester.. Its function is as follows. Digests double-stranded RNA. Involved in the processing of primary rRNA transcript to yield the immediate precursors to the large and small rRNAs (23S and 16S). Processes some mRNAs, and tRNAs when they are encoded in the rRNA operon. Processes pre-crRNA and tracrRNA of type II CRISPR loci if present in the organism. The sequence is that of Ribonuclease 3 from Clostridium tetani (strain Massachusetts / E88).